We begin with the raw amino-acid sequence, 451 residues long: Phosphoglucosamine mutase (451 aa).

The active-site Phosphoserine intermediate is Ser101. Residues Ser101, Asp243, Asp245, and Asp247 each coordinate Mg(2+). The residue at position 101 (Ser101) is a Phosphoserine.

Belongs to the phosphohexose mutase family. Mg(2+) serves as cofactor. Post-translationally, activated by phosphorylation.

It catalyses the reaction alpha-D-glucosamine 1-phosphate = D-glucosamine 6-phosphate. Its function is as follows. Catalyzes the conversion of glucosamine-6-phosphate to glucosamine-1-phosphate. This is Phosphoglucosamine mutase from Geobacter metallireducens (strain ATCC 53774 / DSM 7210 / GS-15).